The following is a 302-amino-acid chain: HTH-type transcriptional regulator AlsR (302 aa).

Positions 1 to 58 constitute an HTH lysR-type domain; it reads MELRHLQYFIAVAEELHFGKAARRLNMTQPPLSQQIKQLEEEVGVTLLKRTKRFVELT. The H-T-H motif DNA-binding region spans 18 to 37; that stretch reads FGKAARRLNMTQPPLSQQIK.

It belongs to the LysR transcriptional regulatory family.

Its function is as follows. Regulates the expression of the alsSD operon for acetoin biosynthesis. The chain is HTH-type transcriptional regulator AlsR (alsR) from Bacillus subtilis (strain 168).